Here is a 218-residue protein sequence, read N- to C-terminus: Ras-related protein R-Ras (218 aa).

The disordered stretch occupies residues 1 to 30; sequence MSSGAASGTGRGRPRGGGPGPRDPPPGETH. The segment covering 7–20 has biased composition (gly residues); that stretch reads SGTGRGRPRGGGPG. 36–44 provides a ligand contact to GTP; that stretch reads GGGGVGKSA. Positions 58-66 match the Effector region motif; it reads YDPTIEDSY. GTP contacts are provided by residues 83–87, 142–145, and 172–174; these read DTAGQ, NKAD, and SAK. C215 is subject to Cysteine methyl ester. A lipid anchor (S-geranylgeranyl cysteine) is attached at C215. A propeptide spans 216 to 218 (removed in mature form); it reads VLL.

Belongs to the small GTPase superfamily. Ras family. Interacts with PLCE1. Interacts (active GTP-bound form preferentially) with RGS14. Interacts with OSBPL3. Interacts with ZDHHC19. Post-translationally, S-palmitoylated by ZDHHC19, leading to increased association with membranes and with rafts/caveolae as well as enhanced cell viability.

Its subcellular location is the cell membrane. It carries out the reaction GTP + H2O = GDP + phosphate + H(+). In terms of biological role, GTP-binding protein with GTPase activity, likely involved in the regulation of MAPK signaling pathway and thereby controlling multiple cellular processes. Regulates the organization of the actin cytoskeleton. With OSPBL3, modulates integrin beta-1 (ITGB1) activity. This is Ras-related protein R-Ras (Rras) from Rattus norvegicus (Rat).